We begin with the raw amino-acid sequence, 266 residues long: Probable septum site-determining protein MinC (266 aa).

Over residues 1-21 (MSEAESTPVEEPVVESTEGSE) the composition is skewed to low complexity. Residues 1–28 (MSEAESTPVEEPVVESTEGSEAIPEVEQ) are disordered.

The protein belongs to the MinC family. As to quaternary structure, interacts with MinD and FtsZ.

In terms of biological role, cell division inhibitor that blocks the formation of polar Z ring septums. Rapidly oscillates between the poles of the cell to destabilize FtsZ filaments that have formed before they mature into polar Z rings. Prevents FtsZ polymerization. This chain is Probable septum site-determining protein MinC, found in Thermosynechococcus vestitus (strain NIES-2133 / IAM M-273 / BP-1).